Reading from the N-terminus, the 462-residue chain is Histidine--tRNA ligase (462 aa).

This sequence belongs to the class-II aminoacyl-tRNA synthetase family. Homodimer.

Its subcellular location is the cytoplasm. The catalysed reaction is tRNA(His) + L-histidine + ATP = L-histidyl-tRNA(His) + AMP + diphosphate + H(+). In Trichormus variabilis (strain ATCC 29413 / PCC 7937) (Anabaena variabilis), this protein is Histidine--tRNA ligase.